The primary structure comprises 322 residues: Light-dependent protochlorophyllide reductase (322 aa).

This sequence belongs to the short-chain dehydrogenases/reductases (SDR) family. POR subfamily.

It carries out the reaction chlorophyllide a + NADP(+) = protochlorophyllide a + NADPH + H(+). The protein operates within porphyrin-containing compound metabolism; chlorophyll biosynthesis. Phototransformation of protochlorophyllide (Pchlide) to chlorophyllide (Chlide). This is Light-dependent protochlorophyllide reductase (por) from Synechocystis sp. (strain ATCC 27184 / PCC 6803 / Kazusa).